The primary structure comprises 157 residues: Small ribosomal subunit protein uS7 (157 aa).

The protein belongs to the universal ribosomal protein uS7 family. Part of the 30S ribosomal subunit. Contacts proteins S9 and S11.

In terms of biological role, one of the primary rRNA binding proteins, it binds directly to 16S rRNA where it nucleates assembly of the head domain of the 30S subunit. Is located at the subunit interface close to the decoding center, probably blocks exit of the E-site tRNA. The sequence is that of Small ribosomal subunit protein uS7 from Francisella philomiragia subsp. philomiragia (strain ATCC 25017 / CCUG 19701 / FSC 153 / O#319-036).